Consider the following 581-residue polypeptide: Protein GAMETOPHYTE DEFECTIVE 1 (581 aa).

Residues 452–467 (SMNIESTSEGGSMSPS) are compositionally biased toward polar residues. The segment at 452–512 (SMNIESTSEG…TTGHASNDEM (61 aa)) is disordered. The segment covering 496–512 (ENSKERATTGHASNDEM) has biased composition (basic and acidic residues).

Belongs to the eukaryotic/archaeal RNase P protein component 3 family. Probable component of nuclear RNase P and RNase MRP ribonucleoproteins. Interacts with POP5. Mostly expressed in inflorescence and roots, to a lower extent in leaves, and, at low levels, in siliques, seedlings and stems.

The protein localises to the nucleus. It is found in the nucleolus. The protein resides in the mitochondrion. Functionally, probable component of ribonuclease P, a ribonucleoprotein complex that generates mature tRNA molecules by cleaving their 5'-ends. May also be a component of the MRP ribonuclease complex, which cleaves pre-rRNA sequences. Required for female gametophyte development and male competence. The chain is Protein GAMETOPHYTE DEFECTIVE 1 from Arabidopsis thaliana (Mouse-ear cress).